A 275-amino-acid chain; its full sequence is Transcription factor JUNGBRUNNEN 1 (275 aa).

Residues 1–24 (MSGEGNLGKDHEEENEAPLPGFRF) form a disordered region. In terms of domain architecture, NAC spans 18 to 167 (PLPGFRFHPT…VWTLCRIFKR (150 aa)). The DNA-binding element occupies 115–173 (VGLKKSLVYYLGSAGKGTKTDWMMHEFRLPSTTKTDSPAQQAEVWTLCRIFKRVTSQRN). The tract at residues 191-219 (CSKTSSLDSDHTSHRTVDSMSHEPPLPQP) is disordered. Over residues 198-211 (DSDHTSHRTVDSMS) the composition is skewed to basic and acidic residues.

In terms of tissue distribution, expressed in roots, root caps, cotyledons, tips and margin of young leaves, senescent regions of fully expanded leaves and floral tissues, including old sepals, petals, staments, mature anthers and pollen grains. Not detected in the abscission zone of open flowers, emerging lateral roots and root meristematic zones.

Its subcellular location is the nucleus. Functionally, transcription factor that binds to the 5'- RRYGCCGT-3' consensus core sequence. Central longevity regulator. Negative regulator of leaf senescence. Modulates cellular H(2)O(2) levels and enhances tolerance to various abiotic stresses through the regulation of DREB2A. The chain is Transcription factor JUNGBRUNNEN 1 (JUB1) from Arabidopsis thaliana (Mouse-ear cress).